A 430-amino-acid chain; its full sequence is Dihydrolipoyllysine-residue acetyltransferase component of pyruvate dehydrogenase complex (430 aa).

In terms of domain architecture, Lipoyl-binding spans 2–77 (AFEFRLPDIG…VVGDVIVKID (76 aa)). N6-lipoyllysine is present on Lys43. The tract at residues 80 to 122 (DAEDMQFKGHDDDSSSKEEPAKEEAPAEQAPVATQTEEVDENR) is disordered. Over residues 84-104 (MQFKGHDDDSSSKEEPAKEEA) the composition is skewed to basic and acidic residues. The Peripheral subunit-binding (PSBD) domain occupies 125–162 (KAMPSVRKYAREKGVNIKAVSGSGKNGRITKEDVDAYL). Positions 164–199 (GGAPTASNESAASATSEEVAETPAAPAAVSLEGDFP) are disordered. A compositionally biased stretch (low complexity) spans 166 to 193 (APTASNESAASATSEEVAETPAAPAAVS). Residue His401 is part of the active site.

The protein belongs to the 2-oxoacid dehydrogenase family. In terms of assembly, forms a 24-polypeptide structural core with octahedral symmetry. (R)-lipoate serves as cofactor.

It catalyses the reaction N(6)-[(R)-dihydrolipoyl]-L-lysyl-[protein] + acetyl-CoA = N(6)-[(R)-S(8)-acetyldihydrolipoyl]-L-lysyl-[protein] + CoA. The pyruvate dehydrogenase complex catalyzes the overall conversion of pyruvate to acetyl-CoA and CO(2). It contains multiple copies of three enzymatic components: pyruvate dehydrogenase (E1), dihydrolipoamide acetyltransferase (E2) and lipoamide dehydrogenase (E3). The sequence is that of Dihydrolipoyllysine-residue acetyltransferase component of pyruvate dehydrogenase complex (pdhC) from Staphylococcus aureus (strain Mu50 / ATCC 700699).